We begin with the raw amino-acid sequence, 315 residues long: 1,2-dihydroxy-3,5-cyclohexadiene-1,4-dicarboxylate dehydrogenase (315 aa).

The a divalent metal cation site is built by H159, H203, and H255.

The protein belongs to the PdxA family.

It carries out the reaction (3S,4R)-3,4-dihydroxycyclohexa-1,5-diene-1,4-dicarboxylate + NAD(+) = 3,4-dihydroxybenzoate + CO2 + NADH. Involved in the degradation of terephthalate (TPA) via the protocatechuate (PCA) 4,5-cleavage pathway. Catalyzes the dehydrogenation of 1,2-dihydroxy-3,5-cyclohexadiene-1,4-dicarboxylate (DCD) to yield protocatechuate (PCA). The sequence is that of 1,2-dihydroxy-3,5-cyclohexadiene-1,4-dicarboxylate dehydrogenase (tphBI) from Comamonas sp.